We begin with the raw amino-acid sequence, 879 residues long: DNA mismatch repair protein MutS (879 aa).

629–636 lines the ATP pocket; it reads GPNMGGKS.

Belongs to the DNA mismatch repair MutS family.

Its function is as follows. This protein is involved in the repair of mismatches in DNA. It is possible that it carries out the mismatch recognition step. This protein has a weak ATPase activity. This is DNA mismatch repair protein MutS from Erythrobacter litoralis (strain HTCC2594).